Consider the following 282-residue polypeptide: ATP phosphoribosyltransferase (282 aa).

It belongs to the ATP phosphoribosyltransferase family. Long subfamily. The cofactor is Mg(2+).

It is found in the cytoplasm. It catalyses the reaction 1-(5-phospho-beta-D-ribosyl)-ATP + diphosphate = 5-phospho-alpha-D-ribose 1-diphosphate + ATP. It functions in the pathway amino-acid biosynthesis; L-histidine biosynthesis; L-histidine from 5-phospho-alpha-D-ribose 1-diphosphate: step 1/9. With respect to regulation, feedback inhibited by histidine. Functionally, catalyzes the condensation of ATP and 5-phosphoribose 1-diphosphate to form N'-(5'-phosphoribosyl)-ATP (PR-ATP). Has a crucial role in the pathway because the rate of histidine biosynthesis seems to be controlled primarily by regulation of HisG enzymatic activity. This is ATP phosphoribosyltransferase from Haloarcula marismortui (strain ATCC 43049 / DSM 3752 / JCM 8966 / VKM B-1809) (Halobacterium marismortui).